The chain runs to 660 residues: Bifunctional polymyxin resistance protein ArnA (660 aa).

Residues 1–304 (MKTVVFAYHD…MLGLVQGSRL (304 aa)) are formyltransferase ArnAFT. Residue 86-88 (HLI) coordinates (6R)-10-formyltetrahydrofolate. The active-site Proton donor; for formyltransferase activity is His104. (6R)-10-formyltetrahydrofolate-binding positions include Arg114 and 136–140 (VKRAD). The interval 314–660 (RRTRVLILGV…RTVDLTDKPS (347 aa)) is dehydrogenase ArnADH. NAD(+)-binding positions include Asp347 and 368 to 369 (DI). Residues Ala393, Tyr398, and 432–433 (TS) each bind UDP-alpha-D-glucuronate. Glu434 (proton acceptor; for decarboxylase activity) is an active-site residue. UDP-alpha-D-glucuronate-binding positions include Arg460, Asn492, 526-535 (KLIDGGKQKR), and Tyr613. Residue Arg619 is the Proton donor; for decarboxylase activity of the active site.

This sequence in the N-terminal section; belongs to the Fmt family. UDP-L-Ara4N formyltransferase subfamily. In the C-terminal section; belongs to the NAD(P)-dependent epimerase/dehydratase family. UDP-glucuronic acid decarboxylase subfamily. As to quaternary structure, homohexamer, formed by a dimer of trimers.

It catalyses the reaction UDP-alpha-D-glucuronate + NAD(+) = UDP-beta-L-threo-pentopyranos-4-ulose + CO2 + NADH. It carries out the reaction UDP-4-amino-4-deoxy-beta-L-arabinose + (6R)-10-formyltetrahydrofolate = UDP-4-deoxy-4-formamido-beta-L-arabinose + (6S)-5,6,7,8-tetrahydrofolate + H(+). It functions in the pathway nucleotide-sugar biosynthesis; UDP-4-deoxy-4-formamido-beta-L-arabinose biosynthesis; UDP-4-deoxy-4-formamido-beta-L-arabinose from UDP-alpha-D-glucuronate: step 1/3. Its pathway is nucleotide-sugar biosynthesis; UDP-4-deoxy-4-formamido-beta-L-arabinose biosynthesis; UDP-4-deoxy-4-formamido-beta-L-arabinose from UDP-alpha-D-glucuronate: step 3/3. The protein operates within bacterial outer membrane biogenesis; lipopolysaccharide biosynthesis. Its function is as follows. Bifunctional enzyme that catalyzes the oxidative decarboxylation of UDP-glucuronic acid (UDP-GlcUA) to UDP-4-keto-arabinose (UDP-Ara4O) and the addition of a formyl group to UDP-4-amino-4-deoxy-L-arabinose (UDP-L-Ara4N) to form UDP-L-4-formamido-arabinose (UDP-L-Ara4FN). The modified arabinose is attached to lipid A and is required for resistance to polymyxin and cationic antimicrobial peptides. The polypeptide is Bifunctional polymyxin resistance protein ArnA (Shigella flexneri).